A 293-amino-acid chain; its full sequence is Urease accessory protein UreD (293 aa).

The tract at residues 1-22 is disordered; it reads MAVAQQAWSPGADPAPSAAPVS. Residues 7–22 show a composition bias toward low complexity; sequence AWSPGADPAPSAAPVS.

This sequence belongs to the UreD family. In terms of assembly, ureD, UreF and UreG form a complex that acts as a GTP-hydrolysis-dependent molecular chaperone, activating the urease apoprotein by helping to assemble the nickel containing metallocenter of UreC. The UreE protein probably delivers the nickel.

It is found in the cytoplasm. Required for maturation of urease via the functional incorporation of the urease nickel metallocenter. This is Urease accessory protein UreD from Alkalilimnicola ehrlichii (strain ATCC BAA-1101 / DSM 17681 / MLHE-1).